The primary structure comprises 520 residues: Succinyl-CoA:3-ketoacid coenzyme A transferase 2B, mitochondrial (520 aa).

Residues 1–39 (MAALRLLAWALPRGVSALRPRPALPHRLIRRYVSDRSGS) constitute a mitochondrion transit peptide. Residues 280–299 (ERLTTRDSKPAPGSKDNDPS) are disordered. The active-site 5-glutamyl coenzyme A thioester intermediate is the E342.

Belongs to the 3-oxoacid CoA-transferase family. Homodimer. As to expression, testis specific. Expressed in late spermatids. Accumulates during spermiogenesis. Also detected in the midpiece of spermatozoa.

The protein localises to the mitochondrion. The catalysed reaction is a 3-oxo acid + succinyl-CoA = a 3-oxoacyl-CoA + succinate. It participates in ketone metabolism; succinyl-CoA degradation; acetoacetyl-CoA from succinyl-CoA: step 1/1. Its function is as follows. Key enzyme for ketone body catabolism. Transfers the CoA moiety from succinate to acetoacetate. Formation of the enzyme-CoA intermediate proceeds via an unstable anhydride species formed between the carboxylate groups of the enzyme and substrate. Probably play and important roles in the energy metabolism of spermatozoa. This chain is Succinyl-CoA:3-ketoacid coenzyme A transferase 2B, mitochondrial (Oxct2b), found in Mus musculus (Mouse).